Consider the following 420-residue polypeptide: Protein MucB (420 aa).

The 186-residue stretch at 2–187 folds into the UmuC domain; that stretch reads FALIDVNGMY…LPVAEVWGVG (186 aa).

Belongs to the DNA polymerase type-Y family.

Its function is as follows. Involved in UV protection and mutation. The protein is Protein MucB (mucB) of Escherichia coli.